The following is a 511-amino-acid chain: Putative polyol transporter 2 (511 aa).

The next 12 membrane-spanning stretches (helical) occupy residues 25–45, 63–83, 94–114, 117–137, 156–176, 186–206, 284–304, 324–344, 351–371, 384–404, 424–444, and 454–474; these read FAFA…YDIG, VQLE…SGAA, YTIV…GFAT, PFIM…MMIA, FPEI…YFFA, FMLG…LAMP, ILIA…DAVV, LATV…TCLV, ALLL…GTSL, WAIG…SLGA, GASL…MTFL, and GAFL…FTFL.

This sequence belongs to the major facilitator superfamily. Sugar transporter (TC 2.A.1.1) family.

Its subcellular location is the membrane. Plasma membrane sugar-proton symporter. This Arabidopsis thaliana (Mouse-ear cress) protein is Putative polyol transporter 2 (PLT2).